We begin with the raw amino-acid sequence, 797 residues long: Probable DNA polymerase (797 aa).

Belongs to the DNA polymerase type-B family.

It localises to the mitochondrion. It catalyses the reaction DNA(n) + a 2'-deoxyribonucleoside 5'-triphosphate = DNA(n+1) + diphosphate. This chain is Probable DNA polymerase, found in Agaricus bitorquis (Pavement mushroom).